A 243-amino-acid chain; its full sequence is UPF0173 metal-dependent hydrolase Caur_2542 (243 aa).

It belongs to the UPF0173 family.

The chain is UPF0173 metal-dependent hydrolase Caur_2542 from Chloroflexus aurantiacus (strain ATCC 29366 / DSM 635 / J-10-fl).